The primary structure comprises 180 residues: Probable DNA replication complex GINS protein PSF2 (180 aa).

Belongs to the GINS2/PSF2 family. Component of the GINS complex which is a heterotetramer of gins1, gins2, gins3 and gins4.

It localises to the nucleus. Its function is as follows. Required for correct functioning of the GINS complex, a complex that plays an essential role in the initiation of DNA replication, and progression of DNA replication forks. GINS complex is a core component of CDC45-MCM-GINS (CMG) helicase, the molecular machine that unwinds template DNA during replication, and around which the replisome is built. This Caenorhabditis elegans protein is Probable DNA replication complex GINS protein PSF2 (psf-2).